The following is an 82-amino-acid chain: Small ribosomal subunit protein bS18 (82 aa).

The segment at 1–25 is disordered; it reads MKRNNMKRARMEQSRRPKKNPLKAE.

This sequence belongs to the bacterial ribosomal protein bS18 family. As to quaternary structure, part of the 30S ribosomal subunit. Forms a tight heterodimer with protein bS6.

Its function is as follows. Binds as a heterodimer with protein bS6 to the central domain of the 16S rRNA, where it helps stabilize the platform of the 30S subunit. The protein is Small ribosomal subunit protein bS18 of Corynebacterium urealyticum (strain ATCC 43042 / DSM 7109).